Reading from the N-terminus, the 771-residue chain is Hyperosmolality-gated Ca2+ permeable channel 1.3 (771 aa).

Residues I7 to I27 traverse the membrane as a helical segment. Phosphoserine is present on S54. 9 helical membrane-spanning segments follow: residues I101–V121, F158–K178, L375–V395, F427–M447, Y467–E487, A512–L532, P584–F604, I630–A650, and A651–C671. Residues V744–K771 are disordered. The span at R751–K771 shows a compositional bias: polar residues.

This sequence belongs to the CSC1 (TC 1.A.17) family. In terms of processing, phosphorylated at Ser-54 by BIK1 in response to pathogen-associated molecular pattern (PAMP) perception, promoting its activation. In terms of tissue distribution, preferentially expressed in guard cells.

It is found in the cell membrane. It carries out the reaction Ca(2+)(in) = Ca(2+)(out). Activated following phosphorylation at Ser-54 by BIK1. Its function is as follows. Calcium-permeable channel that plays a key role in plant stomatal immunity. In response to pathogen-associated molecular pattern (PAMP) perception, phosphorylated and activated by BIK1, triggering rapid influx of calcium ions across the plasma membrane, leading to stomatal closure. This Arabidopsis thaliana (Mouse-ear cress) protein is Hyperosmolality-gated Ca2+ permeable channel 1.3.